The sequence spans 144 residues: uncharacterized protein (144 aa).

A coiled-coil region spans residues Glu-48 to Leu-119.

This is an uncharacterized protein from Archaeoglobus fulgidus (strain ATCC 49558 / DSM 4304 / JCM 9628 / NBRC 100126 / VC-16).